The chain runs to 119 residues: MPRVKGGTVTRKRRKKVLKLAKGYFGSKHTLYKVANQQVMKSGNYAFRDRRQKKRDFRKLWITRINAAARMNGLSYSRLMHGLKLSGIEVNRKMLADLAVNDLNAFNQLADAAKAQLNK.

This sequence belongs to the bacterial ribosomal protein bL20 family.

Functionally, binds directly to 23S ribosomal RNA and is necessary for the in vitro assembly process of the 50S ribosomal subunit. It is not involved in the protein synthesizing functions of that subunit. This chain is Large ribosomal subunit protein bL20, found in Bacillus licheniformis (strain ATCC 14580 / DSM 13 / JCM 2505 / CCUG 7422 / NBRC 12200 / NCIMB 9375 / NCTC 10341 / NRRL NRS-1264 / Gibson 46).